A 418-amino-acid chain; its full sequence is Sprouty-related, EVH1 domain-containing protein 2 (418 aa).

Residues 5-122 (THPDDDSYIV…RGVRKAIEDL (118 aa)) form the WH1 domain. The disordered stretch occupies residues 127–172 (TTSSSTIHNEAELGDDDVFTTATDSSSNSSQKREQPTRTVSSPTSC). Over residues 146–156 (TTATDSSSNSS) the composition is skewed to polar residues. The region spanning 201 to 257 (PYRQVSFPDDDEEIVRINPREKIWMTGYEDYRHAPVRGKYPDPSEDVDSSYVRFAKG) is the KBD domain. Serine 206 is subject to Phosphoserine. Phosphotyrosine occurs at positions 228 and 231. The tract at residues 275 to 302 (GLGEDPKGRGGSVIKTQPSRGKSRRRKE) is disordered. The SPR domain occupies 308–416 (RCVYCRDMFN…CRCCGGKHKA (109 aa)).

Homodimer and heterodimer. Able to interact with SPRED1 to form heterodimers. Interacts with RAS. May interact with ZDHHC13 (via ANK repeats) and ZDHHC17 (via ANK repeats). Interacts with TESK1. Interacts with NF1. Post-translationally, phosphorylated on serine and threonine residues. Phosphorylated on tyrosine. Phosphorylation of Tyr-228 and Tyr-231 are required for ubiquitination. Ubiquitinated; leading to degradation by the proteasome.

The protein resides in the cell membrane. It localises to the cytoplasmic vesicle. It is found in the secretory vesicle membrane. The protein localises to the cytoplasm. Functionally, negatively regulates Ras signaling pathways and downstream activation of MAP kinases. Recruits and translocates NF1 to the cell membrane, thereby enabling NF1-dependent hydrolysis of active GTP-bound Ras to inactive GDP-bound Ras. Inhibits fibroblast growth factor (FGF)-induced retinal lens fiber differentiation, probably by inhibiting FGF-mediated phosphorylation of ERK1/2. Inhibits TGFB-induced epithelial-to-mesenchymal transition in lens epithelial cells. The polypeptide is Sprouty-related, EVH1 domain-containing protein 2 (SPRED2) (Pongo abelii (Sumatran orangutan)).